Reading from the N-terminus, the 88-residue chain is Small ribosomal subunit protein bS20 (88 aa).

A disordered region spans residues 1–27 (MANSKSAKKRALQSEKRRQHNASRRSM).

It belongs to the bacterial ribosomal protein bS20 family.

Binds directly to 16S ribosomal RNA. The polypeptide is Small ribosomal subunit protein bS20 (Shewanella oneidensis (strain ATCC 700550 / JCM 31522 / CIP 106686 / LMG 19005 / NCIMB 14063 / MR-1)).